The chain runs to 334 residues: DNA polymerase beta (334 aa).

K(+) is bound by residues Lys60, Leu62, and Val65. Residues Lys60, Leu62, and Val65 each contribute to the Na(+) site. Lys72 functions as the Nucleophile; Schiff-base intermediate with DNA; for 5'-dRP lyase activity in the catalytic mechanism. Arg83 is modified (omega-N-methylarginine; by PRMT6). K(+) contacts are provided by Thr101, Val103, and Ile106. Na(+) is bound by residues Thr101, Val103, and Ile106. Residue Arg149 coordinates a 2'-deoxyribonucleoside 5'-triphosphate. Arg152 carries the omega-N-methylarginine; by PRMT6 modification. A 2'-deoxyribonucleoside 5'-triphosphate is bound by residues Ser180, Arg183, Gly189, and Asp190. The interval Arg183–Asp192 is DNA-binding. Mg(2+) is bound by residues Asp190, Asp192, and Asp255.

The protein belongs to the DNA polymerase type-X family. In terms of assembly, monomer. Requires Mg(2+) as cofactor. In terms of processing, methylation by PRMT6 stimulates the polymerase activity by enhancing DNA binding and processivity. Ubiquitinated: monoubiquitinated by huwe1/arf-bp1. Monoubiquitinated protein is then the target of stub1/chip, which catalyzes polyubiquitination from monoubiquitin, leading to degradation by the proteasome. usp47 mediates the deubiquitination of monoubiquitinated protein, preventing polyubiquitination by STUB1/CHIP and its subsequent degradation.

The protein localises to the nucleus. It localises to the cytoplasm. It carries out the reaction DNA(n) + a 2'-deoxyribonucleoside 5'-triphosphate = DNA(n+1) + diphosphate. It catalyses the reaction a 5'-end 2'-deoxyribose-2'-deoxyribonucleotide-DNA = (2E,4S)-4-hydroxypenten-2-al-5-phosphate + a 5'-end 5'-phospho-2'-deoxyribonucleoside-DNA + H(+). The catalysed reaction is 2'-deoxyribonucleotide-(2'-deoxyribose 5'-phosphate)-2'-deoxyribonucleotide-DNA = a 3'-end 2'-deoxyribonucleotide-(2,3-dehydro-2,3-deoxyribose 5'-phosphate)-DNA + a 5'-end 5'-phospho-2'-deoxyribonucleoside-DNA + H(+). In terms of biological role, repair polymerase that plays a key role in base-excision repair. During this process, the damaged base is excised by specific DNA glycosylases, the DNA backbone is nicked at the abasic site by an apurinic/apyrimidic (AP) endonuclease, and POLB removes 5'-deoxyribose-phosphate from the preincised AP site acting as a 5'-deoxyribose-phosphate lyase (5'-dRP lyase); through its DNA polymerase activity, it adds one nucleotide to the 3' end of the arising single-nucleotide gap. Conducts 'gap-filling' DNA synthesis in a stepwise distributive fashion rather than in a processive fashion as for other DNA polymerases. It is also able to cleave sugar-phosphate bonds 3' to an intact AP site, acting as an AP lyase. This is DNA polymerase beta (polb) from Xenopus laevis (African clawed frog).